The primary structure comprises 340 residues: Ketol-acid reductoisomerase (NADP(+)) (340 aa).

The KARI N-terminal Rossmann domain maps to 2-182; sequence AELYYDNQAD…GCTRAGVLRT (181 aa). NADP(+) is bound by residues 25-28, serine 51, serine 53, and 83-86; these read FGSQ and DIGQ. Residue histidine 108 is part of the active site. Residue glycine 134 coordinates NADP(+). Residues 183 to 328 enclose the KARI C-terminal knotted domain; the sequence is TFAEETETDL…RELRRMMPFV (146 aa). Mg(2+) is bound by residues aspartate 191, glutamate 195, glutamate 227, and glutamate 231. Serine 252 contributes to the substrate binding site.

It belongs to the ketol-acid reductoisomerase family. The cofactor is Mg(2+).

It carries out the reaction (2R)-2,3-dihydroxy-3-methylbutanoate + NADP(+) = (2S)-2-acetolactate + NADPH + H(+). The enzyme catalyses (2R,3R)-2,3-dihydroxy-3-methylpentanoate + NADP(+) = (S)-2-ethyl-2-hydroxy-3-oxobutanoate + NADPH + H(+). Its pathway is amino-acid biosynthesis; L-isoleucine biosynthesis; L-isoleucine from 2-oxobutanoate: step 2/4. It functions in the pathway amino-acid biosynthesis; L-valine biosynthesis; L-valine from pyruvate: step 2/4. Its function is as follows. Involved in the biosynthesis of branched-chain amino acids (BCAA). Catalyzes an alkyl-migration followed by a ketol-acid reduction of (S)-2-acetolactate (S2AL) to yield (R)-2,3-dihydroxy-isovalerate. In the isomerase reaction, S2AL is rearranged via a Mg-dependent methyl migration to produce 3-hydroxy-3-methyl-2-ketobutyrate (HMKB). In the reductase reaction, this 2-ketoacid undergoes a metal-dependent reduction by NADPH to yield (R)-2,3-dihydroxy-isovalerate. The sequence is that of Ketol-acid reductoisomerase (NADP(+)) from Chloroflexus aurantiacus (strain ATCC 29366 / DSM 635 / J-10-fl).